Consider the following 210-residue polypeptide: Large ribosomal subunit protein mL57 (210 aa).

The transit peptide at 1–59 (MLTRHCNRLGLQIENKFVFRSSSWNCVRRIGKIACNENKYRYEMTSTEEDIDSFFSRVF) directs the protein to the mitochondrion.

The protein belongs to the ribonuclease III family. Mitochondrion-specific ribosomal protein mL57 subfamily. As to quaternary structure, component of the mitochondrial large ribosomal subunit (mt-LSU). Mature yeast 74S mitochondrial ribosomes consist of a small (37S) and a large (54S) subunit. The 37S small subunit contains a 15S ribosomal RNA (15S mt-rRNA) and at least 32 different proteins. The 54S large subunit contains a 21S rRNA (21S mt-rRNA) and at least 45 different proteins. mL57 forms a heterodimer with mL44 and stabilizes rRNA expansion segments 1/2 at a membrane-facing protuberance close to the point of attachment of the ribosome to the translocon in the membrane.

It localises to the mitochondrion. In terms of biological role, component of the mitochondrial ribosome (mitoribosome), a dedicated translation machinery responsible for the synthesis of mitochondrial genome-encoded proteins, including at least some of the essential transmembrane subunits of the mitochondrial respiratory chain. The mitoribosomes are attached to the mitochondrial inner membrane and translation products are cotranslationally integrated into the membrane. This Schizosaccharomyces pombe (strain 972 / ATCC 24843) (Fission yeast) protein is Large ribosomal subunit protein mL57 (mrp15).